Consider the following 331-residue polypeptide: 6-phosphogluconolactonase (331 aa).

At lysine 287 the chain carries N6-acetyllysine.

This sequence belongs to the cycloisomerase 2 family.

The enzyme catalyses 6-phospho-D-glucono-1,5-lactone + H2O = 6-phospho-D-gluconate + H(+). The protein operates within carbohydrate degradation; pentose phosphate pathway; D-ribulose 5-phosphate from D-glucose 6-phosphate (oxidative stage): step 2/3. Catalyzes the hydrolysis of 6-phosphogluconolactone to 6-phosphogluconate. The chain is 6-phosphogluconolactonase from Escherichia coli O127:H6 (strain E2348/69 / EPEC).